A 221-amino-acid polypeptide reads, in one-letter code: Interleukin-12 subunit alpha (221 aa).

Positions 1–25 are cleaved as a signal peptide; sequence MCPLRSLLLISTLVLLHHLPHLSLG. Cystine bridges form between cysteine 39/cysteine 112, cysteine 66/cysteine 198, and cysteine 87/cysteine 125. A glycan (N-linked (GlcNAc...) asparagine) is linked at asparagine 95.

Belongs to the IL-6 superfamily. In terms of assembly, heterodimer with IL12B; disulfide-linked. This heterodimer is known as interleukin IL-12. Heterodimer with EBI3/IL27B; not disulfide-linked. This heterodimer is known as interleukin IL-35. Interacts with NBR1; this interaction promotes IL-12 secretion.

It localises to the secreted. Its function is as follows. Heterodimerizes with IL12B to form the IL-12 cytokine or with EBI3/IL27B to form the IL-35 cytokine. IL-12 is primarily produced by professional antigen-presenting cells (APCs) such as B-cells and dendritic cells (DCs) as well as macrophages and granulocytes and regulates T-cell and natural killer-cell responses, induces the production of interferon-gamma (IFN-gamma), favors the differentiation of T-helper 1 (Th1) cells and is an important link between innate resistance and adaptive immunity. Mechanistically, exerts its biological effects through a receptor composed of IL12R1 and IL12R2 subunits. Binding to the receptor results in the rapid tyrosine phosphorylation of a number of cellular substrates including the JAK family kinases TYK2 and JAK2. In turn, recruited STAT4 gets phosphorylated and translocates to the nucleus where it regulates cytokine/growth factor responsive genes. As part of IL-35, plays essential roles in maintaining the immune homeostasis of the liver microenvironment and also functions as an immune-suppressive cytokine. Mediates biological events through unconventional receptors composed of IL12RB2 and gp130/IL6ST heterodimers or homodimers. Signaling requires the transcription factors STAT1 and STAT4, which form a unique heterodimer that binds to distinct DNA sites. This Bos taurus (Bovine) protein is Interleukin-12 subunit alpha (IL12A).